Consider the following 586-residue polypeptide: ATP-dependent RNA helicase HAS1 (586 aa).

The tract at residues 1–107 (MASDLSKKRK…GDGSLLGPSV (107 aa)) is disordered. A compositionally biased stretch (acidic residues) spans 39 to 60 (EDSDAERDNSSDPEIENQEPEV). The Q motif signature appears at 112-140 (QAFSELNLSDKTMMSINEMGFTKMTEIQR). Residues 143 to 318 (IPPLLAGKDV…RISLRPGPLY (176 aa)) enclose the Helicase ATP-binding domain. 156–163 (AKTGSGKT) provides a ligand contact to ATP. The short motif at 265 to 268 (DEAD) is the DEAD box element. The Helicase C-terminal domain maps to 332–502 (GLDQGYVIVD…NVQSQLEKLI (171 aa)). Positions 557–586 (TLGAGMSRDKKPQARRAYGSQPRQSGHQRR) are disordered. Over residues 577 to 586 (QPRQSGHQRR) the composition is skewed to polar residues.

Belongs to the DEAD box helicase family. DDX18/HAS1 subfamily. Associates in the nucleolus with the 60S and pre-60S ribosomal subunits.

The protein localises to the nucleus. Its subcellular location is the nucleolus. The catalysed reaction is ATP + H2O = ADP + phosphate + H(+). ATP-dependent RNA helicase involved in 40S ribosomal subunit biogenesis. Required for the processing and cleavage of 35S pre-rRNA at sites A0, A1, and A2, leading to mature 18S rRNA. In Chaetomium globosum (strain ATCC 6205 / CBS 148.51 / DSM 1962 / NBRC 6347 / NRRL 1970) (Soil fungus), this protein is ATP-dependent RNA helicase HAS1 (HAS1).